Here is a 63-residue protein sequence, read N- to C-terminus: Transmembrane protein 033R (63 aa).

In Dryophytes versicolor (chameleon treefrog), this protein is Transmembrane protein 033R.